Consider the following 338-residue polypeptide: Glyceraldehyde-3-phosphate dehydrogenase (338 aa).

Residues 12–13 (RI), Asp-34, and Arg-79 each bind NAD(+). Residues 150–152 (SCT), Thr-181, 210–211 (TG), and Arg-233 each bind D-glyceraldehyde 3-phosphate. Residue Cys-151 is the Nucleophile of the active site. Asn-315 provides a ligand contact to NAD(+).

The protein belongs to the glyceraldehyde-3-phosphate dehydrogenase family. Homotetramer.

It is found in the cytoplasm. It carries out the reaction D-glyceraldehyde 3-phosphate + phosphate + NAD(+) = (2R)-3-phospho-glyceroyl phosphate + NADH + H(+). It participates in carbohydrate degradation; glycolysis; pyruvate from D-glyceraldehyde 3-phosphate: step 1/5. The protein is Glyceraldehyde-3-phosphate dehydrogenase (gpd-1) of Neurospora crassa (strain ATCC 24698 / 74-OR23-1A / CBS 708.71 / DSM 1257 / FGSC 987).